The following is a 159-amino-acid chain: Cyclic pyranopterin monophosphate synthase (159 aa).

Residues L75–H77 and M113–E114 each bind substrate. Residue D128 is part of the active site.

This sequence belongs to the MoaC family. As to quaternary structure, homohexamer; trimer of dimers.

The catalysed reaction is (8S)-3',8-cyclo-7,8-dihydroguanosine 5'-triphosphate = cyclic pyranopterin phosphate + diphosphate. The protein operates within cofactor biosynthesis; molybdopterin biosynthesis. Catalyzes the conversion of (8S)-3',8-cyclo-7,8-dihydroguanosine 5'-triphosphate to cyclic pyranopterin monophosphate (cPMP). The polypeptide is Cyclic pyranopterin monophosphate synthase (Thiobacillus denitrificans (strain ATCC 25259 / T1)).